Here is a 427-residue protein sequence, read N- to C-terminus: Glutamate-1-semialdehyde 2,1-aminomutase (427 aa).

Position 265 is an N6-(pyridoxal phosphate)lysine (lysine 265).

The protein belongs to the class-III pyridoxal-phosphate-dependent aminotransferase family. HemL subfamily. In terms of assembly, homodimer. Pyridoxal 5'-phosphate is required as a cofactor.

The protein localises to the cytoplasm. The catalysed reaction is (S)-4-amino-5-oxopentanoate = 5-aminolevulinate. Its pathway is porphyrin-containing compound metabolism; protoporphyrin-IX biosynthesis; 5-aminolevulinate from L-glutamyl-tRNA(Glu): step 2/2. The protein is Glutamate-1-semialdehyde 2,1-aminomutase of Teredinibacter turnerae (strain ATCC 39867 / T7901).